Reading from the N-terminus, the 51-residue chain is Large ribosomal subunit protein eL39 (51 aa).

It belongs to the eukaryotic ribosomal protein eL39 family.

In Pyrobaculum islandicum (strain DSM 4184 / JCM 9189 / GEO3), this protein is Large ribosomal subunit protein eL39.